Here is a 166-residue protein sequence, read N- to C-terminus: RNA pyrophosphohydrolase (166 aa).

Positions 8 to 158 (PYRSCVGMML…KRPVYERVVK (151 aa)) constitute a Nudix hydrolase domain. Residues 47–68 (GGIDPGEDYWEAAQRELLEETN) carry the Nudix box motif.

This sequence belongs to the Nudix hydrolase family. RppH subfamily. Requires a divalent metal cation as cofactor.

Accelerates the degradation of transcripts by removing pyrophosphate from the 5'-end of triphosphorylated RNA, leading to a more labile monophosphorylated state that can stimulate subsequent ribonuclease cleavage. The sequence is that of RNA pyrophosphohydrolase from Afipia carboxidovorans (strain ATCC 49405 / DSM 1227 / KCTC 32145 / OM5) (Oligotropha carboxidovorans).